A 268-amino-acid polypeptide reads, in one-letter code: 4-diphosphocytidyl-2-C-methyl-D-erythritol kinase (268 aa).

K10 is a catalytic residue. 101–111 (PTQAGLGGGST) lines the ATP pocket. The active site involves D143.

It belongs to the GHMP kinase family. IspE subfamily.

It carries out the reaction 4-CDP-2-C-methyl-D-erythritol + ATP = 4-CDP-2-C-methyl-D-erythritol 2-phosphate + ADP + H(+). It functions in the pathway isoprenoid biosynthesis; isopentenyl diphosphate biosynthesis via DXP pathway; isopentenyl diphosphate from 1-deoxy-D-xylulose 5-phosphate: step 3/6. Its function is as follows. Catalyzes the phosphorylation of the position 2 hydroxy group of 4-diphosphocytidyl-2C-methyl-D-erythritol. This Helicobacter acinonychis (strain Sheeba) protein is 4-diphosphocytidyl-2-C-methyl-D-erythritol kinase.